A 3092-amino-acid polypeptide reads, in one-letter code: Probable polyketide synthase 45 (3092 aa).

A Ketosynthase family 3 (KS3) domain is found at 10–430 (DNDVAIIGIG…GSNVCLILTE (421 aa)). Residues Cys170, His315, and His353 each act as for beta-ketoacyl synthase activity in the active site. Residues 640–673 (GILASISIGHSLGEVSSAVCSGMIDLETGCFIIY) form an acyl/malonyl transferase region. Catalysis depends on Ser650, which acts as the For acyl/malonyl transferase activity. The tract at residues 967–1087 (INQLGNRNER…GKFSITKHND (121 aa)) is N-terminal hotdog fold. Positions 967–1254 (INQLGNRNER…YTQLTPYKNQ (288 aa)) constitute a PKS/mFAS DH domain. His999 (proton acceptor; for dehydratase activity) is an active-site residue. The interval 1103-1254 (NFVTIQKKEL…YTQLTPYKNQ (152 aa)) is C-terminal hotdog fold. The active-site Proton donor; for dehydratase activity is the Asp1165. The 79-residue stretch at 2566-2644 (SDDLSIREEI…QLIQSVTDAM (79 aa)) folds into the Carrier domain. O-(pantetheine 4'-phosphoryl)serine is present on Ser2604. Residues 2705–2725 (NTVFLTGSSGFIGIYILFYLI) traverse the membrane as a helical segment.

Pantetheine 4'-phosphate is required as a cofactor.

The protein localises to the membrane. Probable polyketide synthase. The sequence is that of Probable polyketide synthase 45 (pks45) from Dictyostelium discoideum (Social amoeba).